Reading from the N-terminus, the 79-residue chain is U-actitoxin-Bgr3d (79 aa).

The N-terminal stretch at 1 to 21 (MSYERLLCLVLVASFIAASVA) is a signal peptide. Residues 22-38 (QHPGDAPRMEDDSSAIQ) constitute a propeptide that is removed on maturation. Intrachain disulfides connect C44-C76, C46-C69, and C59-C77.

This sequence belongs to the sea anemone type 3 (BDS) potassium channel toxin family.

The protein localises to the secreted. It is found in the nematocyst. In terms of biological role, potently and selectively inhibits voltage-gated potassium channels Kv11/KCNH/ERG. Acts as a gating-modifier toxin that shifts the voltage-dependence of ERG activation in the positive direction and suppresses its current amplitudes elicited by strong depolarizing pulses that maximally activate the channels. The polypeptide is U-actitoxin-Bgr3d (Bunodosoma granuliferum (Red warty sea anemone)).